The following is a 341-amino-acid chain: MSMYTTAQLLAANEQKFKFDPLFLRLFFRESYPFTTEKVYLSQIPGLVNMALYVSPIVSGEVIRSRGGSTSEFTPGYVKPKHEVNPQMTLRRLPDEDPQNLADPAYRRRRIIMQNMRDEELAIAQVEEMQAVSAVLKGKYTMTGEAFDPVEVDMGRSEENNITQSGGTEWSKRDKSTYDPTDDIEAYALNASGVVNIIVFDPKGWALFRSFKAVKEKLDTRRGSNSELETAVKDLGKAVSYKGMYGDVAIVVYSGQYVENGVKKNFLPDNTMVLGNTQARGLRTYGCIQDADAQREGINASARYPKNWVTTGDPAREFTMIQSAPLMLLADPDEFVSVQLA.

This sequence belongs to the lambda phage major capsid protein family. As to quaternary structure, homomultimer. Interacts with FI protein.

Its subcellular location is the virion. It localises to the host cytoplasm. Its function is as follows. Assembles to form an icosahedral capsid with a T=7 symmetry. The icosahedral capsid is about 60 nm in diameter and composed of 415 major capsid proteins. The assembly is primed by the interaction between capsid assembly protease and portal dodecamer, and major capsid proteins assemble cooperatively to form the procapsid with the help of capsid scaffolding protein. Major capsid protein forms hexons and pentons of the icosahedron. Viral genomic DNA is packaged into the procapsid through the portal vertex. The packaging triggers a dramatic reconfiguration of the capsid shell, expanding from roughly 50nm to 60nm while the capsid thickness decreases. The capsid decoration protein binds the expanded capsid and stabilizes it. The sequence is that of Major capsid protein from Escherichia coli (Bacteriophage lambda).